Consider the following 589-residue polypeptide: Parathyroid hormone/parathyroid hormone-related peptide receptor (589 aa).

A signal peptide spans 1-28; the sequence is MGAARIAPGLALLLCCPVLSSAYALVDA. Residues 29-188 lie on the Extracellular side of the membrane; the sequence is DDVMTKEEQI…REREVFDRLG (160 aa). Cystine bridges form between Cys-48–Cys-117, Cys-108–Cys-148, and Cys-131–Cys-170. Positions 64–105 are disordered; that stretch reads ESDKGWASASTSGKPKKEKPSGKLHPESEEDKEVPTGSRPRG. Over residues 81-90 the composition is skewed to basic and acidic residues; the sequence is EKPSGKLHPE. Residues Asn-151, Asn-161, Asn-166, and Asn-176 are each glycosylated (N-linked (GlcNAc...) asparagine). The chain crosses the membrane as a helical span at residues 189–209; the sequence is MIYTVGYSVSLASLTVAVLIL. At 210-223 the chain is on the cytoplasmic side; that stretch reads AYFRRLHCTRNYIH. The helical transmembrane segment at 224-244 threads the bilayer; the sequence is MHLFLSFMLRAVSIFVKDAVL. The Extracellular segment spans residues 245 to 294; the sequence is YSGTALDEAERLTEEELRAIAQAPPPPAAAAGYVGCRVAVTFFLYFLATN. Residues 295-315 form a helical membrane-spanning segment; it reads YYWILVEGLYLHSLIFMAFFS. Residues 316-318 are Cytoplasmic-facing; it reads EKK. The helical transmembrane segment at 319 to 339 threads the bilayer; sequence YLWGFTVFGWGLPAIFVAVWV. The Extracellular segment spans residues 340–360; it reads SVRATLANTGCWDLSSGNKKW. The helical transmembrane segment at 361–381 threads the bilayer; it reads IIQVPILASIVLNFILFINIV. Residues 382–404 are Cytoplasmic-facing; the sequence is RVLATKLRETNAGRCDTRQQYRK. Residues 405–425 form a helical membrane-spanning segment; the sequence is LLKSTLVLMPLFGVHYIVFMA. At 426-439 the chain is on the extracellular side; sequence TPYTEVSGTLWQVQ. The helical transmembrane segment at 440 to 460 threads the bilayer; the sequence is MHYEMLFNSFQGFFVAIIYCF. The Cytoplasmic segment spans residues 461-589; the sequence is CNGEVQAEIK…LLQEEWETVM (129 aa). The Important for interaction with G proteins motif lies at 473-476; sequence WSRW. Residues 524 to 549 form a disordered region; the sequence is AATTNGHPPLPGHTKSGSPALQATPP. Thr-547 is modified (phosphothreonine).

This sequence belongs to the G-protein coupled receptor 2 family. As to quaternary structure, homodimer in the absence of bound ligand. Peptide hormone binding leads to dissociation of the homodimer. In terms of processing, N-glycosylated.

It is found in the cell membrane. G-protein-coupled receptor for parathyroid hormone (PTH) and for parathyroid hormone-related peptide (PTHLH). Ligand binding causes a conformation change that triggers signaling via guanine nucleotide-binding proteins (G proteins) and modulates the activity of downstream effectors, such as adenylate cyclase (cAMP). PTH1R is coupled to G(s) G alpha proteins and mediates activation of adenylate cyclase activity. PTHLH dissociates from PTH1R more rapidly than PTH; as consequence, the cAMP response induced by PTHLH decays faster than the response induced by PTH. The chain is Parathyroid hormone/parathyroid hormone-related peptide receptor (PTH1R) from Bos taurus (Bovine).